The following is an 86-amino-acid chain: MAQKKGGGSTRNGRDSESKRLGVKVFGGQAINAGGIIVRQRGTRVHAGDNVGVGKDHTLFALIDGHVQFAVKGPAKKQQVSVVPAA.

Residues 1–10 (MAQKKGGGST) are compositionally biased toward gly residues. Positions 1–21 (MAQKKGGGSTRNGRDSESKRL) are disordered.

Belongs to the bacterial ribosomal protein bL27 family.

The chain is Large ribosomal subunit protein bL27 from Cupriavidus taiwanensis (strain DSM 17343 / BCRC 17206 / CCUG 44338 / CIP 107171 / LMG 19424 / R1) (Ralstonia taiwanensis (strain LMG 19424)).